We begin with the raw amino-acid sequence, 554 residues long: NADH-quinone oxidoreductase subunit N 3 (554 aa).

A run of 14 helical transmembrane segments spans residues 35-55 (LMPVLIIVVAAVLGILVEAFV), 65-85 (LFLTVVAVAGSFAAIVGLAAG), 105-125 (PTLFLQGTILLVAMVALFTFA), 161-181 (GFTTTEVFPLLLFSVAGLLVF), 187-207 (LLTLFIALEVFSLPLYLLCAV), 222-242 (YFLLGAFSSAFLLFGIALLYG), 275-295 (ALLLIGGAMILTGLLFKVGAV), 322-342 (VAAFGALLRLLYVALPGLAWD), 345-365 (PVMWAVAIVTMLGGAIVAITQ), 371-391 (LLAYSSIAHAGFILAGVIAAS), 398-418 (VLFYLLAYSFVTVGAFAVVTL), 442-462 (VAAVFAVFLLAFAGIPLTSGF), 476-496 (GAGALVVVGVLSSAVAAFFYI), and 525-545 (IAVGVAVTLVLGLAPQYFLDL).

Belongs to the complex I subunit 2 family. In terms of assembly, NDH-1 is composed of 14 different subunits. Subunits NuoA, H, J, K, L, M, N constitute the membrane sector of the complex.

Its subcellular location is the cell membrane. The catalysed reaction is a quinone + NADH + 5 H(+)(in) = a quinol + NAD(+) + 4 H(+)(out). Functionally, NDH-1 shuttles electrons from NADH, via FMN and iron-sulfur (Fe-S) centers, to quinones in the respiratory chain. The immediate electron acceptor for the enzyme in this species is believed to be a menaquinone. Couples the redox reaction to proton translocation (for every two electrons transferred, four hydrogen ions are translocated across the cytoplasmic membrane), and thus conserves the redox energy in a proton gradient. The polypeptide is NADH-quinone oxidoreductase subunit N 3 (Streptomyces griseus subsp. griseus (strain JCM 4626 / CBS 651.72 / NBRC 13350 / KCC S-0626 / ISP 5235)).